The following is a 1044-amino-acid chain: Integrin alpha-8 (1044 aa).

An N-terminal signal peptide occupies residues 1–23 (MPRRQPPRPLLLLSALLCAPASA). Residues 24–991 (FNLDEEKLTV…WSTPNVSFVI (968 aa)) lie on the Extracellular side of the membrane. FG-GAP repeat units follow at residues 28–90 (EEKL…RCRQ), 104–165 (NGTR…AYAE), 170–222 (RNSN…ITNY), 236–288 (QTGV…SSDL), 289–354 (TFIQ…FLFR), 355–413 (DPQI…GLKT), and 417–480 (QVLN…LNPM). Residue Asn-66 is glycosylated (N-linked (GlcNAc...) asparagine). Cys-81 and Cys-88 form a disulfide bridge. Asn-104 carries N-linked (GlcNAc...) asparagine glycosylation. Cysteines 132 and 153 form a disulfide. A glycan (N-linked (GlcNAc...) asparagine) is linked at Asn-159. A disulfide bridge connects residues Cys-169 and Cys-182. The N-linked (GlcNAc...) asparagine glycan is linked to Asn-221. Glu-257, Thr-259, Asp-261, and Glu-265 together coordinate Ca(2+). Asn-284 and Asn-293 each carry an N-linked (GlcNAc...) asparagine glycan. Residues Asp-311, Asn-313, Asp-315, Leu-317, Asp-319, Asp-377, Asn-379, Asp-381, Tyr-383, and Asp-385 each contribute to the Ca(2+) site. Positions 437–439 (RGD) match the Cell attachment site motif. Residues Asp-441, Asp-443, Asn-445, Tyr-447, and Asp-449 each contribute to the Ca(2+) site. Residue Asn-486 is glycosylated (N-linked (GlcNAc...) asparagine). 2 disulfides stabilise this stretch: Cys-489/Cys-500 and Cys-506/Cys-562. N-linked (GlcNAc...) asparagine glycosylation is present at Asn-587. 2 cysteine pairs are disulfide-bonded: Cys-623-Cys-629 and Cys-695-Cys-708. N-linked (GlcNAc...) asparagine glycosylation is found at Asn-701, Asn-719, Asn-751, Asn-762, Asn-818, Asn-877, and Asn-904. 2 cysteine pairs are disulfide-bonded: Cys-849–Cys-905 and Cys-910–Cys-915. N-linked (GlcNAc...) asparagine glycans are attached at residues Asn-952 and Asn-986. Residues 992–1015 (PLWVIILAIMLGLLVLAVLTLALW) traverse the membrane as a helical segment. At 1016–1044 (KCGFFDRARPPQDDMADREQLTNNKTTDA) the chain is on the cytoplasmic side.

The protein belongs to the integrin alpha chain family. As to quaternary structure, heterodimer of an alpha and a beta subunit. The alpha subunit is composed of a heavy and a light chain linked by a disulfide bond. Alpha-8 associates with beta-1. As to expression, prominently expressed on axons and on cells in contact with basal laminae in embryos.

The protein resides in the membrane. It is found in the cell membrane. Functionally, integrin alpha-8/beta-1 functions in the genesis of kidney and probably of other organs by regulating the recruitment of mesenchymal cells into epithelial structures. It recognizes the sequence R-G-D in a wide array of ligands including TNC, FN1, SPP1, TGFB1, TGFB3 and VTN. NPNT is probably its functional ligand in kidney genesis. Neuronal receptor for TNC it mediates cell-cell interactions and regulates neurite outgrowth of sensory and motor neurons. This is Integrin alpha-8 (ITGA8) from Gallus gallus (Chicken).